A 369-amino-acid chain; its full sequence is NSFL1 cofactor p47 (369 aa).

Disordered regions lie at residues 46–115 (DEDI…KSPN) and 133–156 (VDRT…GYRL). Basic and acidic residues predominate over residues 67–81 (SDHRVTSFRDLVHAQ). Positions 109–115 (PRKKSPN) match the Nuclear localization signal motif. A Nuclear localization signal motif is present at residues 172–175 (RHNS). Residues 178 to 243 (DVHVVLKLWK…MEDHRDEEYV (66 aa)) enclose the SEP domain. Positions 260–277 (GSTAPQVLSTSSPAQQAE) are enriched in polar residues. The interval 260-280 (GSTAPQVLSTSSPAQQAENEA) is disordered. The UBX domain occupies 291–367 (SEPVTNIQIR…NLLNAVIVQR (77 aa)).

Belongs to the NSFL1C family.

It localises to the nucleus. Its subcellular location is the golgi apparatus. The protein resides in the golgi stack. It is found in the cytoplasm. The protein localises to the cytoskeleton. It localises to the microtubule organizing center. Its subcellular location is the centrosome. Its function is as follows. Reduces the ATPase activity of VCP. Necessary for the fragmentation of Golgi stacks during mitosis and for VCP-mediated reassembly of Golgi stacks after mitosis. May play a role in VCP-mediated formation of transitional endoplasmic reticulum (tER). Inhibits the activity of CTSL (in vitro). Together with UBXN2B/p37, regulates the centrosomal levels of kinase AURKA/Aurora A levels during mitotic progression by promoting AURKA removal from centrosomes in prophase. Also, regulates spindle orientation during mitosis. The chain is NSFL1 cofactor p47 (NSFL1C) from Gallus gallus (Chicken).